Reading from the N-terminus, the 201-residue chain is 3-isopropylmalate dehydratase small subunit (201 aa).

It belongs to the LeuD family. LeuD type 1 subfamily. Heterodimer of LeuC and LeuD.

The catalysed reaction is (2R,3S)-3-isopropylmalate = (2S)-2-isopropylmalate. It functions in the pathway amino-acid biosynthesis; L-leucine biosynthesis; L-leucine from 3-methyl-2-oxobutanoate: step 2/4. Catalyzes the isomerization between 2-isopropylmalate and 3-isopropylmalate, via the formation of 2-isopropylmaleate. The chain is 3-isopropylmalate dehydratase small subunit from Methylorubrum extorquens (strain ATCC 14718 / DSM 1338 / JCM 2805 / NCIMB 9133 / AM1) (Methylobacterium extorquens).